The primary structure comprises 361 residues: 3-dehydroquinate synthase (361 aa).

Belongs to the archaeal-type DHQ synthase family.

The catalysed reaction is 2-amino-2,3,7-trideoxy-D-lyxo-hept-6-ulosonate + NAD(+) + H2O = 3-dehydroquinate + NH4(+) + NADH + H(+). Its function is as follows. Catalyzes the oxidative deamination and cyclization of 2-amino-3,7-dideoxy-D-threo-hept-6-ulosonic acid (ADH) to yield 3-dehydroquinate (DHQ), which is fed into the canonical shikimic pathway of aromatic amino acid biosynthesis. The polypeptide is 3-dehydroquinate synthase (Methanococcus maripaludis (strain C7 / ATCC BAA-1331)).